We begin with the raw amino-acid sequence, 1361 residues long: uncharacterized protein (1361 aa).

This sequence belongs to the IIV-6 261R/396L/443R family.

This is an uncharacterized protein from Invertebrate iridescent virus 6 (IIV-6).